A 339-amino-acid polypeptide reads, in one-letter code: Methyltransferase ptaI (339 aa).

It belongs to the methyltransferase superfamily.

It functions in the pathway secondary metabolite biosynthesis. Methyltransferase; part of the gene cluster that mediates the biosynthesis of pestheic acid, a diphenyl ether which is a biosynthetic precursor of the unique chloropupukeananes. The biosynthesis initiates from condensation of acetate and malonate units catalyzed by the non-reducing PKS ptaA. As the ptaA protein is TE/CLC domain-deficient, hydrolysis and Claisen cyclization of the polyketide could be catalyzed by ptaB containing a beta-lactamase domain. The ptaB protein might hydrolyze the thioester bond between the ACP of ptaA and the intermediate to release atrochrysone carboxylic acid, which is spontaneously dehydrated to form endocrocin anthrone. Endocrocin anthrone is then converted to endocrocin, catalyzed by the anthrone oxygenase ptaC. Spontaneous decarboxylation of endocrocin occurs to generate emodin. An O-methyltransferase (ptaH or ptaI) could methylate emodin to form physcion. PtaJ could then catalyze the oxidative cleavage of physcion, and rotation of the intermediate could then afford desmethylisosulochrin. PtaF, a putative NADH-dependent oxidoreductase, might also participate in the oxidative cleavage step. Desmethylisosulochrin is then transformed by another O-methyltransferase (ptaH or ptaI) to form isosulochrin. Chlorination of isosulochrin by ptaM in the cyclohexadienone B ring then produces chloroisosulochrin. PtaE is responsible for the oxidative coupling reactions of both benzophenones isosulouchrin and chloroisosulochrin to RES-1214-1 and pestheic acid respectively, regardless of chlorination. This Pestalotiopsis fici (strain W106-1 / CGMCC3.15140) protein is Methyltransferase ptaI.